The chain runs to 100 residues: Cystatin-B (100 aa).

One can recognise a Cystatin domain in the interval glycine 6–glutamine 88. The Secondary area of contact motif lies at glutamine 48–glycine 52.

This sequence belongs to the cystatin family. Widely expressed. Highly expressed in liver and to a lesser extent in spleen, gill, brain, intestine, kidney, head kidney and blood. Lowest level in muscle.

The protein resides in the cytoplasm. Thiol protease inhibitor. Has papain inhibitory activity in vitro. May be involved in immune responses against invading Gram-negative bacteria. This chain is Cystatin-B, found in Oplegnathus fasciatus (Barred knifejaw).